The following is a 701-amino-acid chain: Elongation factor G (701 aa).

One can recognise a tr-type G domain in the interval 8–291 (GRYRNIGIVA…AVIDYLPAPT (284 aa)). Residues 17-24 (AHVDAGKT), 89-93 (DTPGH), and 143-146 (NKMD) contribute to the GTP site.

It belongs to the TRAFAC class translation factor GTPase superfamily. Classic translation factor GTPase family. EF-G/EF-2 subfamily.

It localises to the cytoplasm. Catalyzes the GTP-dependent ribosomal translocation step during translation elongation. During this step, the ribosome changes from the pre-translocational (PRE) to the post-translocational (POST) state as the newly formed A-site-bound peptidyl-tRNA and P-site-bound deacylated tRNA move to the P and E sites, respectively. Catalyzes the coordinated movement of the two tRNA molecules, the mRNA and conformational changes in the ribosome. The sequence is that of Elongation factor G from Pseudomonas savastanoi pv. phaseolicola (strain 1448A / Race 6) (Pseudomonas syringae pv. phaseolicola (strain 1448A / Race 6)).